Here is a 355-residue protein sequence, read N- to C-terminus: Homeobox protein knotted-1-like 12 (355 aa).

Disordered stretches follow at residues 52–82 and 207–233; these read AAGP…GGGE and ECVG…PRAE. Residues 60–75 show a composition bias toward basic residues; it reads GHGHPHHGGGHHHSKH. Basic and acidic residues predominate over residues 218-233; sequence PSGRENEPPEIDPRAE. The 21-residue stretch at 236 to 256 folds into the ELK domain; the sequence is ELKFQLLKKYSGYLSSLRQEF. Residues 257 to 320 constitute a DNA-binding region (homeobox; TALE-type); sequence SKKKKKGKLP…NQRKRHWKPS (64 aa).

It belongs to the TALE/KNOX homeobox family. As to expression, expressed in stems, rachis and inflorescence.

It localises to the nucleus. Probable transcription factor that may be involved in shoot formation during embryogenesis. This Oryza sativa subsp. japonica (Rice) protein is Homeobox protein knotted-1-like 12 (OSH15).